A 378-amino-acid chain; its full sequence is Cytochrome b (378 aa).

4 helical membrane passes run 34–54 (FGSL…FLAM), 78–99 (WLLR…YLHV), 114–134 (WLIG…GYVL), and 179–199 (FFTF…IHLL). Heme b is bound by residues H84 and H98. Heme b is bound by residues H183 and H197. H202 is an a ubiquinone binding site. 4 helical membrane passes run 227–247 (FKDI…VLIS), 289–309 (LGGV…PFYN), 321–341 (INQV…WIGA), and 348–368 (YVLI…VNPL).

It belongs to the cytochrome b family. The main subunits of complex b-c1 are: cytochrome b, cytochrome c1 and the Rieske protein. Heme b is required as a cofactor.

Its subcellular location is the mitochondrion inner membrane. Functionally, component of the ubiquinol-cytochrome c reductase complex (complex III or cytochrome b-c1 complex) that is part of the mitochondrial respiratory chain. The b-c1 complex mediates electron transfer from ubiquinol to cytochrome c. Contributes to the generation of a proton gradient across the mitochondrial membrane that is then used for ATP synthesis. The protein is Cytochrome b (mt:Cyt-b) of Drosophila mauritiana (Fruit fly).